The chain runs to 597 residues: K(+) efflux antiporter 6 (597 aa).

Positions 1–35 are cleaved as a signal peptide; sequence MVEGRRRRRFSLSSQQLALLLLLLSFFLCFSVASP. The next 12 helical transmembrane spans lie at 177–197, 201–221, 224–244, 257–277, 287–307, 321–341, 351–371, 396–416, 440–460, 461–481, 499–519, and 543–563; these read LISD…AFAC, PVIT…LNFI, MVQV…ALGL, VAVL…GITV, GVFV…KFLM, IGIL…LPVL, MLSI…LSIL, LAAV…GLSL, IEPI…MLVN, VHFL…VIII, TALL…VLLS, and LVTT…GILL.

This sequence belongs to the monovalent cation:proton antiporter 2 (CPA2) transporter (TC 2.A.37) family. KEA (TC 2.A.37.1) subfamily. Expressed in roots, stems, leaves, flowers and silique.

The protein localises to the golgi apparatus membrane. It is found in the golgi apparatus. It localises to the trans-Golgi network membrane. The protein resides in the prevacuolar compartment membrane. Its subcellular location is the endomembrane system. The enzyme catalyses K(+)(in) + H(+)(out) = K(+)(out) + H(+)(in). Its function is as follows. Electroneutral K(+)/H(+) efflux antiporter involved in K(+) homeostasis and osmotic adjustment. Together with KEA4 and KEA5, promotes growth and development, and facilitates endosomal pH and ions homeostasis, as well as salt tolerance (e.g. K(+), NaCl and LiCl), probably by supporting cell wall biosynthesis during rapid etiolated seedling growth. The polypeptide is K(+) efflux antiporter 6 (Arabidopsis thaliana (Mouse-ear cress)).